The chain runs to 1434 residues: DNA-directed RNA polymerase subunit beta (1434 aa).

Belongs to the RNA polymerase beta chain family. In terms of assembly, the RNAP catalytic core consists of 2 alpha, 1 beta, 1 beta' and 1 omega subunit. When a sigma factor is associated with the core the holoenzyme is formed, which can initiate transcription.

It carries out the reaction RNA(n) + a ribonucleoside 5'-triphosphate = RNA(n+1) + diphosphate. Its function is as follows. DNA-dependent RNA polymerase catalyzes the transcription of DNA into RNA using the four ribonucleoside triphosphates as substrates. The protein is DNA-directed RNA polymerase subunit beta of Ureaplasma urealyticum serovar 10 (strain ATCC 33699 / Western).